The following is a 1564-amino-acid chain: Nucleoporin nup184 (1564 aa).

The protein resides in the nucleus. It localises to the nuclear pore complex. Its function is as follows. Interacts with pom152 in the core structure of the nuclear pore complex (NPC). Involved in the export of mRNA. In Schizosaccharomyces pombe (strain 972 / ATCC 24843) (Fission yeast), this protein is Nucleoporin nup184 (nup184).